Reading from the N-terminus, the 132-residue chain is UPF0332 protein TM_1000 (132 aa).

This sequence belongs to the UPF0332 family.

In Thermotoga maritima (strain ATCC 43589 / DSM 3109 / JCM 10099 / NBRC 100826 / MSB8), this protein is UPF0332 protein TM_1000.